The chain runs to 268 residues: Ribonuclease P protein subunit p30 (268 aa).

An N-acetylalanine modification is found at Ala2. Ser251 carries the phosphoserine modification.

The protein belongs to the eukaryotic/archaeal RNase P protein component 3 family. In terms of assembly, component of nuclear RNase P and RNase MRP ribonucleoproteins. RNase P consists of a catalytic RNA moiety and about 10 protein subunits; POP1, POP4, POP5, POP7, RPP14, RPP21, RPP25, RPP30, RPP38 and RPP40. Within the RNase P complex, POP1, POP7 and RPP25 form the 'finger' subcomplex, POP5, RPP14, RPP40 and homodimeric RPP30 form the 'palm' subcomplex, and RPP21, POP4 and RPP38 form the 'wrist' subcomplex. All subunits of the RNase P complex interact with the catalytic RNA. Several subunits of RNase P are also part of the RNase MRP complex. RNase MRP consists of a catalytic RNA moiety and about 8 protein subunits; POP1, POP7, RPP25, RPP30, RPP38, RPP40 and possibly also POP4 and POP5.

Its subcellular location is the nucleus. The protein localises to the nucleolus. Component of ribonuclease P, a ribonucleoprotein complex that generates mature tRNA molecules by cleaving their 5'-ends. Also a component of the MRP ribonuclease complex, which cleaves pre-rRNA sequences. This chain is Ribonuclease P protein subunit p30 (Rpp30), found in Mus musculus (Mouse).